The primary structure comprises 78 residues: Large ribosomal subunit protein bL28 (78 aa).

The protein belongs to the bacterial ribosomal protein bL28 family.

The protein is Large ribosomal subunit protein bL28 of Shigella boydii serotype 4 (strain Sb227).